Reading from the N-terminus, the 212-residue chain is Agglutinin isolectin 1 (212 aa).

The first 26 residues, 1 to 26, serve as a signal peptide directing secretion; the sequence is MKMMSTRALALGAAAVLAFAAATAQA. Gln-27 bears the Pyrrolidone carboxylic acid mark. Chitin-binding type-1 domains are found at residues 27–68, 69–111, 112–154, and 155–197; these read QRCG…ACWT, SKRC…PCRA, DIKC…ACST, and DKPC…GCDG. 16 cysteine pairs are disulfide-bonded: Cys-29–Cys-44, Cys-38–Cys-50, Cys-43–Cys-57, Cys-61–Cys-66, Cys-72–Cys-87, Cys-81–Cys-93, Cys-86–Cys-100, Cys-104–Cys-109, Cys-115–Cys-130, Cys-124–Cys-136, Cys-129–Cys-143, Cys-147–Cys-152, Cys-158–Cys-173, Cys-167–Cys-179, Cys-172–Cys-186, and Cys-190–Cys-195. 36–38 contacts substrate; that stretch reads MEC. A substrate-binding site is contributed by 88–99; the sequence is SQYGYCGFGAEY. 140-141 is a binding site for substrate; the sequence is SE. Residues 198 to 212 constitute a propeptide that is removed on maturation; it reads VFAEAITANSTLLQE.

In terms of assembly, homodimer, u-shaped.

Its function is as follows. N-acetyl-D-glucosamine / N-acetyl-D-neuraminic acid binding lectin. The sequence is that of Agglutinin isolectin 1 from Triticum aestivum (Wheat).